We begin with the raw amino-acid sequence, 351 residues long: Photosystem II D2 protein (351 aa).

Residues 39-59 form a helical membrane-spanning segment; sequence CAFLALGGWLTGTTFVTSWYT. His116 serves as a coordination point for chlorophyll a. The helical transmembrane segment at 123-139 threads the bilayer; the sequence is GFMLRQFEIARLVGIRP. 2 residues coordinate pheophytin a: Gln128 and Asn141. The chain crosses the membrane as a helical span at residues 151–164; sequence VFVSVFLMYPLGQS. Position 196 (His196) interacts with chlorophyll a. Residues 206–226 traverse the membrane as a helical segment; that stretch reads GALLCAIHGATVENTLFEDGE. Residues His213 and Phe260 each contribute to the a plastoquinone site. His213 is a Fe cation binding site. Position 267 (His267) interacts with Fe cation. The helical transmembrane segment at 277-293 threads the bilayer; the sequence is GLWMSAVGIVGLALNLR.

Belongs to the reaction center PufL/M/PsbA/D family. In terms of assembly, PSII is composed of 1 copy each of membrane proteins PsbA, PsbB, PsbC, PsbD, PsbE, PsbF, PsbH, PsbI, PsbJ, PsbK, PsbL, PsbM, PsbT, PsbX, PsbY, PsbZ, Psb30/Ycf12, peripheral proteins PsbO, CyanoQ (PsbQ), PsbU, PsbV and a large number of cofactors. It forms dimeric complexes. The cofactor is The D1/D2 heterodimer binds P680, chlorophylls that are the primary electron donor of PSII, and subsequent electron acceptors. It shares a non-heme iron and each subunit binds pheophytin, quinone, additional chlorophylls, carotenoids and lipids. There is also a Cl(-1) ion associated with D1 and D2, which is required for oxygen evolution. The PSII complex binds additional chlorophylls, carotenoids and specific lipids..

The protein resides in the cellular thylakoid membrane. The enzyme catalyses 2 a plastoquinone + 4 hnu + 2 H2O = 2 a plastoquinol + O2. Photosystem II (PSII) is a light-driven water:plastoquinone oxidoreductase that uses light energy to abstract electrons from H(2)O, generating O(2) and a proton gradient subsequently used for ATP formation. It consists of a core antenna complex that captures photons, and an electron transfer chain that converts photonic excitation into a charge separation. The D1/D2 (PsbA/PsbD) reaction center heterodimer binds P680, the primary electron donor of PSII as well as several subsequent electron acceptors. D2 is needed for assembly of a stable PSII complex. The chain is Photosystem II D2 protein from Nostoc sp. (strain PCC 7120 / SAG 25.82 / UTEX 2576).